The sequence spans 260 residues: Carbonic anhydrase 2 (260 aa).

Ser-2 bears the N-acetylserine mark. Ser-2 bears the Phosphoserine mark. The Alpha-carbonic anhydrase domain occupies 3–259; it reads HHWGYGKHNG…LKGRQVKASF (257 aa). His-64 serves as the catalytic Proton donor/acceptor. Zn(2+) contacts are provided by His-94, His-96, and His-119. Phosphoserine is present on residues Ser-165 and Ser-172. 198-199 serves as a coordination point for substrate; the sequence is TT.

Belongs to the alpha-carbonic anhydrase family. In terms of assembly, interacts with SLC4A4 and SLC26A6. Interaction with SLC4A7 regulates SLC4A7 transporter activity. The cofactor is Zn(2+).

Its subcellular location is the cytoplasm. It is found in the cell membrane. It carries out the reaction hydrogencarbonate + H(+) = CO2 + H2O. It catalyses the reaction urea = cyanamide + H2O. Its activity is regulated as follows. Inhibited by acetazolamide. Catalyzes the reversible hydration of carbon dioxide. Can also hydrate cyanamide to urea. Involved in the regulation of fluid secretion into the anterior chamber of the eye. Essential for bone resorption and osteoclast differentiation. Contributes to intracellular pH regulation in the duodenal upper villous epithelium during proton-coupled peptide absorption. Stimulates the chloride-bicarbonate exchange activity of SLC26A6. The polypeptide is Carbonic anhydrase 2 (CA2) (Oryctolagus cuniculus (Rabbit)).